The chain runs to 222 residues: Pyridoxine/pyridoxamine 5'-phosphate oxidase (222 aa).

Substrate contacts are provided by residues R16–Y19 and K75. FMN is bound by residues R70–K75, F85–T86, K92, and Q114. Positions 132, 136, and 140 each coordinate substrate. FMN contacts are provided by residues Q149–S150 and W195. R201 to H203 is a binding site for substrate. R205 contacts FMN.

This sequence belongs to the pyridoxamine 5'-phosphate oxidase family. Homodimer. It depends on FMN as a cofactor.

The enzyme catalyses pyridoxamine 5'-phosphate + O2 + H2O = pyridoxal 5'-phosphate + H2O2 + NH4(+). It carries out the reaction pyridoxine 5'-phosphate + O2 = pyridoxal 5'-phosphate + H2O2. It functions in the pathway cofactor metabolism; pyridoxal 5'-phosphate salvage; pyridoxal 5'-phosphate from pyridoxamine 5'-phosphate: step 1/1. Its pathway is cofactor metabolism; pyridoxal 5'-phosphate salvage; pyridoxal 5'-phosphate from pyridoxine 5'-phosphate: step 1/1. In terms of biological role, catalyzes the oxidation of either pyridoxine 5'-phosphate (PNP) or pyridoxamine 5'-phosphate (PMP) into pyridoxal 5'-phosphate (PLP). In Saccharopolyspora erythraea (strain ATCC 11635 / DSM 40517 / JCM 4748 / NBRC 13426 / NCIMB 8594 / NRRL 2338), this protein is Pyridoxine/pyridoxamine 5'-phosphate oxidase.